Reading from the N-terminus, the 432-residue chain is MSLNIETTQGLERRVAITVPTEIVSKAVREEFKRAAKNVRVDGFRKGHVPAHIIEQRFGASIRQDVLNDLLPRHFFDAVIAEKINIAGRPTFAIETFEEGKDLVFTATFEVYPEVKLQGLENIKVEKPTVEITEADIDKMIDVLRKQQATWAESQDVVKADDRVTIDFVGSVDGEEFEGGKATDFVLFMGQGRMIPGFEEGIVGHKAGEQFDIDVTFPAEYHAENLKGKAAKFAITLKKIENMVLPELTDEFVAKFGPNTKSVADLRAEIRKNMERELKNALVSRVKQQVINGLIEQNPIDVPASAVEEEINVLRNQAAQRFGGNAQQTAQLPRELFEAEATRRVQVGLLFSEVIKSNELKADEERAKAMIADIASAYEQPAEVVEYYSKNEELMNNIRNVVLEEQAVDAVLAKAQVTEKVSSFDEIMNPQA.

Positions 161 to 246 (DDRVTIDFVG…LKKIENMVLP (86 aa)) constitute a PPIase FKBP-type domain.

It belongs to the FKBP-type PPIase family. Tig subfamily.

The protein resides in the cytoplasm. The catalysed reaction is [protein]-peptidylproline (omega=180) = [protein]-peptidylproline (omega=0). In terms of biological role, involved in protein export. Acts as a chaperone by maintaining the newly synthesized protein in an open conformation. Functions as a peptidyl-prolyl cis-trans isomerase. This chain is Trigger factor, found in Haemophilus influenzae (strain 86-028NP).